The following is a 432-amino-acid chain: Lecithin-cholesterol acyltransferase-like 1 (432 aa).

The helical transmembrane segment at 7-29 (HYSVVIAILVVVTMTSMCQAVGS) threads the bilayer. The active-site Acyl-ester intermediate is the serine 209. Active-site charge relay system residues include aspartate 374 and histidine 400.

It belongs to the AB hydrolase superfamily. Lipase family.

It localises to the membrane. This chain is Lecithin-cholesterol acyltransferase-like 1 (LCAT1), found in Arabidopsis thaliana (Mouse-ear cress).